We begin with the raw amino-acid sequence, 190 residues long: dCTP deaminase (190 aa).

K107 to R112 contributes to the dCTP binding site. E133 serves as the catalytic Proton donor/acceptor. Residues Q152, Y166, and Q176 each coordinate dCTP.

Belongs to the dCTP deaminase family. Homotrimer.

The catalysed reaction is dCTP + H2O + H(+) = dUTP + NH4(+). The protein operates within pyrimidine metabolism; dUMP biosynthesis; dUMP from dCTP (dUTP route): step 1/2. Catalyzes the deamination of dCTP to dUTP. The chain is dCTP deaminase from Campylobacter hominis (strain ATCC BAA-381 / DSM 21671 / CCUG 45161 / LMG 19568 / NCTC 13146 / CH001A).